The following is a 393-amino-acid chain: Serpin-Z4 (393 aa).

Positions glycine 342 to aspartate 366 are RCL.

Belongs to the serpin family.

Probable serine protease inhibitor. The chain is Serpin-Z4 from Arabidopsis thaliana (Mouse-ear cress).